We begin with the raw amino-acid sequence, 345 residues long: MVSSNFYKNLGPRKLTAIIDFLHDIIEPPKIHEDIAIHDIKILQEASPNDISFLSNPKYSEFLKTTKAAACIVPKNFTGEANPNTVLLHTQNSYFAYGKLIDFFYAPIKSYPAKIMKSAIVADSATIGKNCYIGHNVVIEDDVIIGDNSIIEAGSFIGRGVNIGRNARIEQHVSINYTIIGDDVVILAGAKIGQDGFGFSTEKGIHHKIFHIGIVKIGNNVEIGANTTIDRGSLQDTIIKDLCRIDNLVQIGHGVKIGKGSIIIAQTGIAGSSTIGKYCTLGGQVGIAGHLNIGDGAQVAAQGGVAQNIEAGKIVGGSPAVPIMDWHRQSIIMKQLLTSNSKLKK.

Residue His-253 is the Proton acceptor of the active site.

The protein belongs to the transferase hexapeptide repeat family. LpxD subfamily. As to quaternary structure, homotrimer.

It catalyses the reaction a UDP-3-O-[(3R)-3-hydroxyacyl]-alpha-D-glucosamine + a (3R)-hydroxyacyl-[ACP] = a UDP-2-N,3-O-bis[(3R)-3-hydroxyacyl]-alpha-D-glucosamine + holo-[ACP] + H(+). The protein operates within bacterial outer membrane biogenesis; LPS lipid A biosynthesis. Functionally, catalyzes the N-acylation of UDP-3-O-acylglucosamine using 3-hydroxyacyl-ACP as the acyl donor. Is involved in the biosynthesis of lipid A, a phosphorylated glycolipid that anchors the lipopolysaccharide to the outer membrane of the cell. The protein is UDP-3-O-acylglucosamine N-acyltransferase of Rickettsia massiliae (strain Mtu5).